A 520-amino-acid chain; its full sequence is 4-hydroxyphenylacetate 3-monooxygenase oxygenase component (520 aa).

Belongs to the FADH(2)-utilizing monooxygenase family. 4-HPA 3-monooxygenase consists of a reductase component HpaC and an oxygenase component HpaB.

The enzyme catalyses 4-hydroxyphenylacetate + FADH2 + O2 = 3,4-dihydroxyphenylacetate + FAD + H2O + H(+). Its pathway is aromatic compound metabolism; 4-hydroxyphenylacetate degradation; pyruvate and succinate semialdehyde from 4-hydroxyphenylacetate: step 1/7. In terms of biological role, utilizes FADH(2) supplied by HpaC or by another flavin reductase, to catalyze the hydroxylation of 4-hydroxyphenylacetic acid, leading to the production of 3,4-DHPA. Can also oxidize phenol to catechol, and hydroxylate other phenol derivatives. The protein is 4-hydroxyphenylacetate 3-monooxygenase oxygenase component (hpaB) of Escherichia coli.